A 287-amino-acid chain; its full sequence is 4-diphosphocytidyl-2-C-methyl-D-erythritol kinase (287 aa).

Lys12 is an active-site residue. 94–104 is a binding site for ATP; sequence PAQAGMGGGSS. Residue Asp136 is part of the active site.

The protein belongs to the GHMP kinase family. IspE subfamily.

The catalysed reaction is 4-CDP-2-C-methyl-D-erythritol + ATP = 4-CDP-2-C-methyl-D-erythritol 2-phosphate + ADP + H(+). It participates in isoprenoid biosynthesis; isopentenyl diphosphate biosynthesis via DXP pathway; isopentenyl diphosphate from 1-deoxy-D-xylulose 5-phosphate: step 3/6. Its function is as follows. Catalyzes the phosphorylation of the position 2 hydroxy group of 4-diphosphocytidyl-2C-methyl-D-erythritol. This Albidiferax ferrireducens (strain ATCC BAA-621 / DSM 15236 / T118) (Rhodoferax ferrireducens) protein is 4-diphosphocytidyl-2-C-methyl-D-erythritol kinase.